The sequence spans 282 residues: Serine/threonine-protein kinase Aurora-2 (282 aa).

The Protein kinase domain maps to F19 to I270. Residues L25–V33 and K48 each bind ATP. The active-site Proton acceptor is the D142. S164 is subject to Phosphoserine. T173 carries the post-translational modification Phosphothreonine.

It belongs to the protein kinase superfamily. Ser/Thr protein kinase family. Aurora subfamily. Phosphorylation at Thr-173 may regulate activity and degradation of AUR2 in a cell cycle dependent manner. In terms of tissue distribution, abundant in roots, flowers and flower buds, low or absent in expanded leaves, stems and siliques.

The protein resides in the nucleus membrane. It is found in the cytoplasm. It localises to the cytoskeleton. Its subcellular location is the spindle. The protein localises to the spindle pole. The catalysed reaction is L-seryl-[protein] + ATP = O-phospho-L-seryl-[protein] + ADP + H(+). It catalyses the reaction L-threonyl-[protein] + ATP = O-phospho-L-threonyl-[protein] + ADP + H(+). Its function is as follows. Phosphorylates specifically 'Ser-10' of histone H3 in vitro. Associates with cytoskeletal structures that are necessary for cytokinesis and with the microtubule spindle. Might colocalize with gamma-tubulin and function in microtubule organizing centers (MTOCs). The protein is Serine/threonine-protein kinase Aurora-2 (AUR2) of Arabidopsis thaliana (Mouse-ear cress).